The primary structure comprises 489 residues: Putative general secretion pathway protein A (489 aa).

An ATP-binding site is contributed by 26–33 (GEAGSGKT). The helical transmembrane segment at 237–257 (MQLAVVMSGTIIALTCGWLLL) threads the bilayer.

The protein belongs to the ExeA family.

The protein localises to the cell membrane. Functionally, may play a regulatory role under conditions of derepressed gsp gene expression. The protein is Putative general secretion pathway protein A (gspA) of Escherichia coli (strain K12).